The following is a 229-amino-acid chain: Large ribosomal subunit protein uL1 (229 aa).

The protein belongs to the universal ribosomal protein uL1 family. As to quaternary structure, part of the 50S ribosomal subunit.

Its function is as follows. Binds directly to 23S rRNA. The L1 stalk is quite mobile in the ribosome, and is involved in E site tRNA release. Functionally, protein L1 is also a translational repressor protein, it controls the translation of the L11 operon by binding to its mRNA. The polypeptide is Large ribosomal subunit protein uL1 (Actinobacillus succinogenes (strain ATCC 55618 / DSM 22257 / CCUG 43843 / 130Z)).